The following is a 382-amino-acid chain: Dual-specificity RNA methyltransferase RlmN (382 aa).

Catalysis depends on Glu96, which acts as the Proton acceptor. A Radical SAM core domain is found at 102–342 (QGKRGTLCVS…VRTTRGEDID (241 aa)). A disulfide bond links Cys109 and Cys345. Residues Cys116, Cys120, and Cys123 each contribute to the [4Fe-4S] cluster site. Residues 170-171 (GE), Ser202, 224-226 (SLH), and Asn302 contribute to the S-adenosyl-L-methionine site. Catalysis depends on Cys345, which acts as the S-methylcysteine intermediate.

The protein belongs to the radical SAM superfamily. RlmN family. Requires [4Fe-4S] cluster as cofactor.

It localises to the cytoplasm. It catalyses the reaction adenosine(2503) in 23S rRNA + 2 reduced [2Fe-2S]-[ferredoxin] + 2 S-adenosyl-L-methionine = 2-methyladenosine(2503) in 23S rRNA + 5'-deoxyadenosine + L-methionine + 2 oxidized [2Fe-2S]-[ferredoxin] + S-adenosyl-L-homocysteine. It carries out the reaction adenosine(37) in tRNA + 2 reduced [2Fe-2S]-[ferredoxin] + 2 S-adenosyl-L-methionine = 2-methyladenosine(37) in tRNA + 5'-deoxyadenosine + L-methionine + 2 oxidized [2Fe-2S]-[ferredoxin] + S-adenosyl-L-homocysteine. Its function is as follows. Specifically methylates position 2 of adenine 2503 in 23S rRNA and position 2 of adenine 37 in tRNAs. m2A2503 modification seems to play a crucial role in the proofreading step occurring at the peptidyl transferase center and thus would serve to optimize ribosomal fidelity. This chain is Dual-specificity RNA methyltransferase RlmN, found in Pseudomonas syringae pv. tomato (strain ATCC BAA-871 / DC3000).